We begin with the raw amino-acid sequence, 109 residues long: Small ribosomal subunit protein uS17 (109 aa).

The protein belongs to the universal ribosomal protein uS17 family. In terms of assembly, part of the 30S ribosomal subunit.

One of the primary rRNA binding proteins, it binds specifically to the 5'-end of 16S ribosomal RNA. This Methanococcus vannielii protein is Small ribosomal subunit protein uS17.